The sequence spans 206 residues: Large ribosomal subunit protein uL4 (206 aa).

Belongs to the universal ribosomal protein uL4 family. Part of the 50S ribosomal subunit.

Functionally, one of the primary rRNA binding proteins, this protein initially binds near the 5'-end of the 23S rRNA. It is important during the early stages of 50S assembly. It makes multiple contacts with different domains of the 23S rRNA in the assembled 50S subunit and ribosome. Forms part of the polypeptide exit tunnel. This chain is Large ribosomal subunit protein uL4, found in Paracoccus denitrificans (strain Pd 1222).